The sequence spans 190 residues: MVWLAELPDEILENLYPGEDVLYSVKKKLYTELKPKYLIVTDRRIIYLDQKILGRYDLIDIPYEKLEFVHFKKGKIGAKFIIRNEEGEEIVLTWMEKDEAEKAIEAIRDAINAIAVEPVSIQKRKGILGFELELSKPKEFITRTYPQAVAKAAPKEDPIERIRKLKELYESGVISREEFEEKKRKLLDQI.

This is an uncharacterized protein from Archaeoglobus fulgidus (strain ATCC 49558 / DSM 4304 / JCM 9628 / NBRC 100126 / VC-16).